The sequence spans 1332 residues: Delta-poly-L-ornithine synthetase (1332 aa).

L-ornithine contacts are provided by D217, E221, and T304. The D-ornithine site is built by E221, T304, G306, and T308. L-ornithine contacts are provided by V312 and S313. S313 contributes to the D-ornithine binding site. The region spanning 524 to 601 is the Carrier domain; it reads QPQNPAEEIL…AIAALMLEQP (78 aa). S560 is subject to O-(pantetheine 4'-phosphoryl)serine. 6 consecutive transmembrane segments (helical) span residues 629-649, 664-684, 868-888, 908-928, 1120-1140, and 1151-1171; these read LVTI…PFFT, AIAL…VLSI, VSAL…FLLV, LYYF…TAVI, IVLP…DVID, and LVAL…IVAL.

The protein belongs to the ATP-dependent AMP-binding enzyme family. Pantetheine 4'-phosphate serves as cofactor.

It localises to the cell membrane. The enzyme catalyses n L-ornithine + n ATP + H2O = N(5)-(L-ornithyl)-[N(5)-(L-ornithyl)]n-1 + n AMP + n diphosphate + n H(+). It catalyses the reaction n D-ornithine + n ATP + H2O = N(5)-(D-ornithyl)-[N(5)-(D-ornithyl)]n-1 + n AMP + n diphosphate + n H(+). Its function is as follows. Catalyzes the polymerization of L-ornithine, generating poly-L-ornithine composed of 7-12 amino acid units joined via isopeptide bonds between the carboxylate and the side chain amine. This polymer exhibits potent antifungal activity and thus may have a potential role in survival benefit for A.baumannii. The reaction occurs via ATP-dependent adenylation of the substrate. Can also adenylate D-ornithine with similar efficiency and thus may produce D-ornithine polymers. The chain is Delta-poly-L-ornithine synthetase from Acinetobacter baumannii (strain AB307-0294).